The primary structure comprises 408 residues: MVKVNADYLKLKAGYLFPEISRRITEFSSKNPNANLIRLGIGDVTEPLPLACREAMKAAIEEMGTEDGFRGYGPEQGYKWLREIISENDYISRGCEISAEEIFVSDGSKCDSSNILDILGKENKIAVTDPVYPVYVDTNVMTGRTGEANSVGEYTGLSYIPINSENGFEASIPKDKFDLIYLCFPNNPTGAVATKEQLVSWVKYAKENNSLILFDAAYEAFIKDESIPHSIFEIEGARDCAIEFRSFSKNAGFTGTRCAFTVIPKSLKGKAGIETVDLWSLWNRRQSTKFNGVSYVVQRGAEAVYSKEGKIQIKKLVSFYMDNAEIIKSNLTAAGFEVFGAVNAPYAWIKTPKNMSSWDFFDFLLEKANVVGTPGSGFGAAGEGYFRLSAFNSRENVEKAMERIVKLK.

Positions 15 and 42 each coordinate substrate. Residues Y72, 108 to 109 (SK), Y132, N187, Y218, and 246 to 248 (SFS) each bind pyridoxal 5'-phosphate. Residues K109, Y132, and N187 each coordinate substrate. K249 bears the N6-(pyridoxal phosphate)lysine mark. R257 and N291 together coordinate pyridoxal 5'-phosphate. Substrate-binding residues include N291 and R387.

Belongs to the class-I pyridoxal-phosphate-dependent aminotransferase family. LL-diaminopimelate aminotransferase subfamily. As to quaternary structure, homodimer. The cofactor is pyridoxal 5'-phosphate.

It catalyses the reaction (2S,6S)-2,6-diaminopimelate + 2-oxoglutarate = (S)-2,3,4,5-tetrahydrodipicolinate + L-glutamate + H2O + H(+). Its pathway is amino-acid biosynthesis; L-lysine biosynthesis via DAP pathway; LL-2,6-diaminopimelate from (S)-tetrahydrodipicolinate (aminotransferase route): step 1/1. Its function is as follows. Involved in the synthesis of meso-diaminopimelate (m-DAP or DL-DAP), required for both lysine and peptidoglycan biosynthesis. Catalyzes the direct conversion of tetrahydrodipicolinate to LL-diaminopimelate. This Prochlorococcus marinus (strain NATL1A) protein is LL-diaminopimelate aminotransferase.